The sequence spans 312 residues: tRNA pseudouridine synthase B (312 aa).

The Nucleophile role is filled by Asp46. Substrate is bound by residues Tyr74, Tyr177, and Leu198.

The protein belongs to the pseudouridine synthase TruB family. Type 1 subfamily.

The enzyme catalyses uridine(55) in tRNA = pseudouridine(55) in tRNA. Its function is as follows. Responsible for synthesis of pseudouridine from uracil-55 in the psi GC loop of transfer RNAs. This chain is tRNA pseudouridine synthase B, found in Buchnera aphidicola subsp. Schizaphis graminum (strain Sg).